The chain runs to 117 residues: RutC family protein HD_0322 (117 aa).

The protein belongs to the RutC family.

The polypeptide is RutC family protein HD_0322 (Haemophilus ducreyi (strain 35000HP / ATCC 700724)).